The chain runs to 245 residues: Aliphatic sulfonates import ATP-binding protein SsuB (245 aa).

Positions 6–225 (VTVRGLRRAF…SRGDEGFDDL (220 aa)) constitute an ABC transporter domain. 38–45 (GLSGSGKS) contributes to the ATP binding site.

Belongs to the ABC transporter superfamily. Aliphatic sulfonates importer (TC 3.A.1.17.2) family. In terms of assembly, the complex is composed of two ATP-binding proteins (SsuB), two transmembrane proteins (SsuC) and a solute-binding protein (SsuA).

Its subcellular location is the cell membrane. It carries out the reaction ATP + H2O + aliphatic sulfonate-[sulfonate-binding protein]Side 1 = ADP + phosphate + aliphatic sulfonateSide 2 + [sulfonate-binding protein]Side 1.. Part of the ABC transporter complex SsuABC involved in aliphatic sulfonates import. Responsible for energy coupling to the transport system. In Mycobacterium sp. (strain MCS), this protein is Aliphatic sulfonates import ATP-binding protein SsuB.